A 252-amino-acid polypeptide reads, in one-letter code: Probable endonuclease 4 (252 aa).

Zn(2+)-binding residues include histidine 56, histidine 96, glutamate 129, aspartate 162, histidine 165, histidine 191, aspartate 204, histidine 206, and glutamate 233.

This sequence belongs to the AP endonuclease 2 family. Zn(2+) is required as a cofactor.

The catalysed reaction is Endonucleolytic cleavage to 5'-phosphooligonucleotide end-products.. Its function is as follows. Endonuclease IV plays a role in DNA repair. It cleaves phosphodiester bonds at apurinic or apyrimidinic (AP) sites, generating a 3'-hydroxyl group and a 5'-terminal sugar phosphate. The protein is Probable endonuclease 4 of Mycobacterium ulcerans (strain Agy99).